The chain runs to 626 residues: Probable potassium transport system protein Kup (626 aa).

A run of 13 helical transmembrane segments spans residues 8–28 (VALP…IGTS), 44–64 (ISEA…TLSI), 102–122 (IYLI…GIIT), 139–159 (PAFD…LFMV), 171–191 (FGPI…YSII), 196–216 (ILWF…PFVA), 217–237 (FVAM…YADM), 249–269 (WFIV…ALLL), 281–301 (LLVP…AAVI), 339–359 (IYVP…IILF), 377–397 (MLCV…WPWW), 399–419 (VTLF…STSL), and 421–441 (ILSG…ILMT).

The protein belongs to the HAK/KUP transporter (TC 2.A.72) family.

Its subcellular location is the cell inner membrane. The catalysed reaction is K(+)(in) + H(+)(in) = K(+)(out) + H(+)(out). Transport of potassium into the cell. Likely operates as a K(+):H(+) symporter. The chain is Probable potassium transport system protein Kup from Acinetobacter baylyi (strain ATCC 33305 / BD413 / ADP1).